A 507-amino-acid polypeptide reads, in one-letter code: Nuclear poly(A) polymerase 3 (507 aa).

ATP-binding positions include 79-81 (YGS), 91-94 (SDID), D147, K208, Y217, and 226-227 (GV). Positions 92, 94, and 147 each coordinate Mg(2+).

Belongs to the poly(A) polymerase family. In terms of assembly, monomer. Forms a complex with cleavage and polyadenylation specificity factor (CPSF) subunits FIPS5 and CPSF30. It depends on Mg(2+) as a cofactor. The cofactor is Mn(2+). Expressed in leaves (mostly in petioles and tips), cotyledon, roots (tips, vascular tissue of the radicle, and throughout the root tissue excluding the elongation zone), stems, and flowers (restricted to the stigma and the pollen in mature anthers). Active in the primary and secondary root systems.

The protein localises to the nucleus. The catalysed reaction is RNA(n) + ATP = RNA(n)-3'-adenine ribonucleotide + diphosphate. Its function is as follows. Essential protein. Polymerase that creates the 3'-poly(A) tail of mRNA's. Also required for the endoribonucleolytic cleavage reaction at some polyadenylation sites. May acquire specificity through interaction with a cleavage and polyadenylation specificity factor (CPSF) at its C-terminus. In Arabidopsis thaliana (Mouse-ear cress), this protein is Nuclear poly(A) polymerase 3.